The primary structure comprises 287 residues: Methylamine utilization ferredoxin-type protein MauN (287 aa).

2 consecutive 4Fe-4S ferredoxin-type domains span residues 218 to 248 (RVAAARREGCTNCGACFQICTEPHVITPALK) and 251 to 280 (GSTLILSGDCVNCGSCIDACPVNVFEMTMR). Cys227, Cys230, Cys233, Cys237, Cys260, Cys263, Cys266, and Cys270 together coordinate [4Fe-4S] cluster.

The protein operates within one-carbon metabolism; methylamine degradation. Involved in electron transfer. This chain is Methylamine utilization ferredoxin-type protein MauN (mauN), found in Methylorubrum extorquens (strain ATCC 14718 / DSM 1338 / JCM 2805 / NCIMB 9133 / AM1) (Methylobacterium extorquens).